A 763-amino-acid polypeptide reads, in one-letter code: Serine/threonine-protein kinase PknG (763 aa).

Positions 1–32 (MKREHMDHDTEDVGQAAQRADPPSGTTEGRLQ) are disordered. The region spanning 160 to 406 (YEVKGCIAHG…SAEEMSAQLM (247 aa)) is the Protein kinase domain. ATP contacts are provided by residues 166–174 (IAHGGLGWV) and lysine 190. Aspartate 289 acts as the Proton acceptor in catalysis.

It belongs to the protein kinase superfamily. Ser/Thr protein kinase family. Autophosphorylated.

It carries out the reaction L-seryl-[protein] + ATP = O-phospho-L-seryl-[protein] + ADP + H(+). The enzyme catalyses L-threonyl-[protein] + ATP = O-phospho-L-threonyl-[protein] + ADP + H(+). The protein is Serine/threonine-protein kinase PknG (pknG) of Mycobacterium leprae (strain TN).